Consider the following 170-residue polypeptide: MPRSRINGNFIDKTFSIVANILLRIIPTTSGEKRAFTYYRDGMLAQSEGNYAEALQNYYEAMRLEIDPYDRSYILYNIGLIHTSNGEHTKALEYYFRALERNPFLPQAFNNMAVICHYRGEQAILQGDSEIAEAWFDQAAEYWKQAIALTPGNYIEAQNWLKITKRFEFE.

3 TPR repeats span residues 35-68 (AFTY…EIDP), 72-105 (SYIL…NPFL), and 120-153 (GEQA…TPGN).

The protein belongs to the Ycf3 family.

Its subcellular location is the plastid. It localises to the chloroplast thylakoid membrane. In terms of biological role, essential for the assembly of the photosystem I (PSI) complex. May act as a chaperone-like factor to guide the assembly of the PSI subunits. The sequence is that of Photosystem I assembly protein Ycf3 from Oryza sativa (Rice).